We begin with the raw amino-acid sequence, 594 residues long: Actin-histidine N-methyltransferase (594 aa).

Positions 1-22 are disordered; that stretch reads MGKKSRVKTQKSGTGATATVSP. The span at 10 to 20 shows a compositional bias: polar residues; it reads QKSGTGATATV. Residues R75, 104–106, R254, 275–279, and 325–327 contribute to the S-adenosyl-L-methionine site; these read EGF, DMCNH, and SGF. Residues 94 to 314 enclose the SET domain; it reads EGFEMVNFKE…AGDQIYIFYG (221 aa). The segment at 551 to 594 is disordered; it reads GLVNGENLIPNGTRSENESLSPEESENVTGEESSGSMAKVKERL.

Belongs to the class V-like SAM-binding methyltransferase superfamily. SETD3 actin-histidine methyltransferase family. Interacts with MYOD1. Phosphorylated by GSK3B, which is required for recognition by the SCF(FBXW7) complex and subsequent degradation. Post-translationally, ubiquitinated by the SCF(FBXW7) complex following phosphorylation by GSK3B, leading to its degradation by the proteasome. In terms of tissue distribution, prominently expressed in the heart and skeletal muscles and is also detected weakly in the stomach, small intestine, and colon.

It localises to the cytoplasm. It is found in the nucleus. The enzyme catalyses L-histidyl-[protein] + S-adenosyl-L-methionine = N(tele)-methyl-L-histidyl-[protein] + S-adenosyl-L-homocysteine + H(+). Protein-histidine N-methyltransferase that specifically mediates 3-methylhistidine (tele-methylhistidine) methylation of actin at 'His-73'. Histidine methylation of actin is required for smooth muscle contraction of the laboring uterus during delivery. Does not have protein-lysine N-methyltransferase activity and probably only catalyzes histidine methylation of actin. In Mus musculus (Mouse), this protein is Actin-histidine N-methyltransferase.